Here is a 338-residue protein sequence, read N- to C-terminus: MSSAGKLPSEVERTLVRKSGAWTNPAYGCPPEKRPIHEYIEKGVVNIDKPRGPTSHEVAAWVKAILGVHTAGHAGSLDPKVTGLLPTLLGKATLAVPALRLSGKEYICHLKLHRAMPQKLVRQVCEEFTGPIYQMPPIKSAVKRVIRVRTIYHLEVLEIEGTSVLFRVGCEAGTYIRKLCHDIGLALGCGGHMQGLRRTKAGPFTEKTLITLHELKDAYVFWKEDGDESELRRVIRPMESAVSHLPKIILRDSAVDAICSGASLAVPGITGLDSNLAEGELTGLFTLKGELVALAKAKMTTEEILKASAGIAASPIRVLMEAGTYPRGWTKKEEKVQL.

Aspartate 78 acts as the Nucleophile in catalysis. The 76-residue stretch at 245–320 (LPKIILRDSA…IAASPIRVLM (76 aa)) folds into the PUA domain.

This sequence belongs to the pseudouridine synthase TruB family. Type 2 subfamily.

The catalysed reaction is uridine(55) in tRNA = pseudouridine(55) in tRNA. In terms of biological role, could be responsible for synthesis of pseudouridine from uracil-55 in the psi GC loop of transfer RNAs. The sequence is that of Probable tRNA pseudouridine synthase B from Methanosarcina mazei (strain ATCC BAA-159 / DSM 3647 / Goe1 / Go1 / JCM 11833 / OCM 88) (Methanosarcina frisia).